The primary structure comprises 492 residues: MNERGMLVDPRFDAFFKLEQIDDYKYDGADTSPSTSNGLPETSNGGRLICDVCGDVAFGKHYGINACNGCKGFFRRSVWSRRQYSCRFGGDCPVVKEHRNVCRSCRLKKCFEVGMNPDSVQNERDRNAKNGGMGGPMSSPTQSSLCKELTISNGQIKRKRLRPETVEKTTQTDGKLEINDDFDFENMQQNPTPPGLLPLKIERISTPPSDLPVPMDFSIHSAVLDIEQKVFYNCPVAVDNSINATKTPITLPFEVVFRQPHLVCNRYPMRFSNTRVLTPEDLIDGWRRHFTYYSDWCHAMDEFKALSPEDQIVLAKKKIILHGWLVHAYYSYKSGCNGICFANGAAHLPEGGHPSITEFYKECMPRYLNYVIYPMHNFQMDDAEMVLIKCIMFFSSESGLSAAGRQIVSAAREKYLSALYNYGRANKCTTSAQATLRIAKFMIMLSAITSLTHLMNEGVHVTSLFNIIEFDELIQATHKTTPPQHSPPAPMG.

A DNA-binding region (nuclear receptor) is located at residues 47-122 (RLICDVCGDV…VGMNPDSVQN (76 aa)). NR C4-type zinc fingers lie at residues 50–70 (CDVC…CNGC) and 86–110 (CRFG…LKKC). The segment at 121 to 143 (QNERDRNAKNGGMGGPMSSPTQS) is disordered. One can recognise an NR LBD domain in the interval 215 to 481 (MDFSIHSAVL…ELIQATHKTT (267 aa)).

The protein belongs to the nuclear hormone receptor family.

It is found in the nucleus. In terms of biological role, orphan nuclear receptor. The polypeptide is Nuclear hormone receptor family member nhr-4 (nhr-4) (Caenorhabditis elegans).